The following is a 146-amino-acid chain: Large ribosomal subunit protein uL23m (146 aa).

Residues 108 to 138 (PDLFPEKDPRSPEPLEEELPQQRQSSDLRCP) are disordered. A compositionally biased stretch (basic and acidic residues) spans 111–120 (FPEKDPRSPE).

It belongs to the universal ribosomal protein uL23 family. Component of the mitochondrial ribosome large subunit (39S) which comprises a 16S rRNA and about 50 distinct proteins.

It is found in the mitochondrion. The chain is Large ribosomal subunit protein uL23m (Mrpl23) from Mus musculus (Mouse).